Reading from the N-terminus, the 348-residue chain is Protein RecA (348 aa).

Residue 66–73 (GPESSGKT) coordinates ATP.

Belongs to the RecA family.

It localises to the cytoplasm. Its function is as follows. Can catalyze the hydrolysis of ATP in the presence of single-stranded DNA, the ATP-dependent uptake of single-stranded DNA by duplex DNA, and the ATP-dependent hybridization of homologous single-stranded DNAs. It interacts with LexA causing its activation and leading to its autocatalytic cleavage. In Legionella pneumophila (strain Paris), this protein is Protein RecA.